The following is a 446-amino-acid chain: uncharacterized protein (446 aa).

Positions 141–282 (TEAETNGTRP…GPKPKVKRVS (142 aa)) are disordered. The span at 159–170 (NSGSKPKAGTQS) shows a compositional bias: polar residues. Residues 194–210 (IKSERRSISQGGEKDKA) show a composition bias toward basic and acidic residues. Phosphoserine occurs at positions 200, 202, 212, and 214. 2 stretches are compositionally biased toward low complexity: residues 211–221 (SSSSPSSSQQS) and 229–239 (SPSQQNSRSSS). Ser251 carries the post-translational modification Phosphoserine. Positions 269–280 (GKSRGPKPKVKR) are enriched in basic residues. Ser282 and Ser307 each carry phosphoserine.

This is an uncharacterized protein from Drosophila melanogaster (Fruit fly).